Here is a 1009-residue protein sequence, read N- to C-terminus: Type VII secretion system accessory factor EsaA (1009 aa).

6 helical membrane-spanning segments follow: residues I7–V27, I822–F842, A869–I889, K903–L923, S928–L948, and I979–F999.

Belongs to the EsaA family. In terms of assembly, homodimer. Interacts with EssB.

It localises to the cell membrane. Component of the type VII secretion system (Ess). Provides together with EssB and other components such as EssC and EssE a secretion platform across the cytoplasmic membrane in the host. In Staphylococcus aureus (strain MRSA252), this protein is Type VII secretion system accessory factor EsaA.